The sequence spans 439 residues: tRNA(Ile)-lysidine synthase (439 aa).

An ATP-binding site is contributed by 23-28; sequence SGGLDS.

Belongs to the tRNA(Ile)-lysidine synthase family.

It is found in the cytoplasm. It catalyses the reaction cytidine(34) in tRNA(Ile2) + L-lysine + ATP = lysidine(34) in tRNA(Ile2) + AMP + diphosphate + H(+). Ligates lysine onto the cytidine present at position 34 of the AUA codon-specific tRNA(Ile) that contains the anticodon CAU, in an ATP-dependent manner. Cytidine is converted to lysidine, thus changing the amino acid specificity of the tRNA from methionine to isoleucine. In Methylococcus capsulatus (strain ATCC 33009 / NCIMB 11132 / Bath), this protein is tRNA(Ile)-lysidine synthase.